A 1064-amino-acid chain; its full sequence is WD repeat-containing protein on Y chromosome (1064 aa).

8 WD repeats span residues 150–194 (EEVT…IRTA), 317–356 (RIPL…EPSA), 360–399 (GHNG…LLQT), 450–489 (THAA…RKII), 502–541 (IIDI…VVRN), 589–629 (FHTD…RRYS), 742–781 (KTGD…VPAS), and 825–864 (GHLK…LGTL). The interval 1022-1044 (SSLNIKQPTRRRSGKTHDPRNIR) is disordered.

The chain is WD repeat-containing protein on Y chromosome from Drosophila ananassae (Fruit fly).